We begin with the raw amino-acid sequence, 325 residues long: Pyruvate dehydrogenase E1 component subunit beta (325 aa).

Position 60 (Glu-60) interacts with thiamine diphosphate.

Heterodimer of an alpha and a beta chain. Thiamine diphosphate is required as a cofactor.

It carries out the reaction N(6)-[(R)-lipoyl]-L-lysyl-[protein] + pyruvate + H(+) = N(6)-[(R)-S(8)-acetyldihydrolipoyl]-L-lysyl-[protein] + CO2. Its function is as follows. The pyruvate dehydrogenase complex catalyzes the overall conversion of pyruvate to acetyl-CoA and CO(2). It contains multiple copies of three enzymatic components: pyruvate dehydrogenase (E1), dihydrolipoamide acetyltransferase (E2) and lipoamide dehydrogenase (E3). The protein is Pyruvate dehydrogenase E1 component subunit beta (pdhB) of Geobacillus stearothermophilus (Bacillus stearothermophilus).